The primary structure comprises 290 residues: MEKLLQWSIANSQGDKEAMARAGQPDPKLLQQLFGGGGPDDPTLMKESMAVIMNPEVDLETKLVAFDNFEMLIENLDNANNIENLKLWEPLLDVLVQTKDEELRAAALSIIGTAVQNNLDSQNNFMKYDNGLRSLIEIASDKTKPLDVRTKAFYALSNLIRNHKDISEKFFKLNGLDCIAPVLSDNTAKPKLKMRAIALLTAYLSSVKIDENIISVLRKDGVIESTIECLSDESNLNIIDRVLSFLSHLISSGIKFNEQELHKLNEGYKHIEPLKDRLNEDDYLAVKYVL.

Ser12 is subject to Phosphoserine. 6 ARM repeats span residues Gln13 to Val57, Leu76 to Gln116, Asp120 to Arg161, Lys164 to Ser205, Glu211 to Ser251, and Gly253 to Leu290.

It belongs to the FES1 family. As to quaternary structure, interacts with the Hsp70 chaperones SSA1 and SSB1.

Its subcellular location is the cytoplasm. Its function is as follows. Involved in protein translation, propagation of [PSI+] prions, and polyamine tolerance. Functions as a nucleotide exchange factor (NEF), which accelerates the release of ADP, for the cytosolic Hsp70 chaperone SSA1 and the ribosome-associated Hsp70 chaperone SSB1. Required for fully efficient Hsp70-mediated folding of proteins. The sequence is that of Hsp70 nucleotide exchange factor FES1 (FES1) from Saccharomyces cerevisiae (strain ATCC 204508 / S288c) (Baker's yeast).